Consider the following 1184-residue polypeptide: Calcium-activated potassium channel subunit alpha-1a (1184 aa).

Residues 1–39 (MSNNINFNKNPDSSVSISKMDVIIPFTPDVPCDNNGQRM) are Extracellular-facing. Residues 40–60 (WWAFLASSMVTFFGGLFIILL) form a helical membrane-spanning segment. Residues 61-132 (WRTLKYLWTV…MISAQTLTGR (72 aa)) lie on the Cytoplasmic side of the membrane. S-palmitoyl cysteine attachment occurs at residues Cys-71, Cys-72, and Cys-74. The chain crosses the membrane as a helical span at residues 133-153 (VLVVLVFALSIGALGIYFIDS). The Extracellular segment spans residues 154–168 (SDPIESCQNFYKDFT). A helical membrane pass occupies residues 169–189 (LQIDMAFNVFFLLYFGLRFIA). Over 190 to 193 (ANDK) the chain is Cytoplasmic. The helical transmembrane segment at 194–214 (LWFWLEVNSVVDFFTVPPVFV) threads the bilayer. Topologically, residues 215–254 (SVYLNRSWLGLRFLRALRLIQFSEILQFLNILKTSNSIKL) are extracellular. Residues 255–275 (VNLCSIFISTWLTAAGFIHLV) form a helical membrane-spanning segment. Residues 276–289 (ENSGDPWENFQNSQ) lie on the Cytoplasmic side of the membrane. The chain crosses the membrane as a helical span at residues 290–310 (PLSYWECVYLLMVTMSTVGYG). At 311 to 321 (DVYARTTLGRL) the chain is on the extracellular side. The chain crosses the membrane as a helical span at residues 322 to 342 (FMVFFILGGLAMFASYVPEII). The Cytoplasmic portion of the chain corresponds to 343 to 1184 (ELIGNRKKYG…PPIREVEDEC (842 aa)). One can recognise an RCK N-terminal 1 domain in the interval 361–503 (RKHIVVCGHI…WNWKEGDDAI (143 aa)). Glu-393, Gln-416, and Glu-418 together coordinate Mg(2+). Position 468 (Asn-468) interacts with Ca(2+). The segment at 655-677 (EHPSTLSPKKKQRNGGMRNSPNC) is disordered. Thr-659 carries the phosphothreonine modification. A phosphoserine mark is found at Ser-661, Ser-674, and Ser-678. An RCK N-terminal 2 domain is found at 735-879 (SGHVVVCIFG…MDRSSPDNSP (145 aa)). At Thr-866 the chain carries Phosphothreonine. Phosphoserine occurs at positions 874 and 878. Residues Gln-908, Asp-911, Asp-914, and Asp-916 each contribute to the Ca(2+) site. The Calcium bowl motif lies at 908–916 (QFLDQDDDD). The segment at 1082-1143 (RASLSHSSHS…PEKRWFTDEA (62 aa)) is disordered. Over residues 1084 to 1104 (SLSHSSHSSHSSSKKSSSVHS) the composition is skewed to low complexity. The segment covering 1116 to 1125 (KAREARDKQN) has biased composition (basic and acidic residues).

The protein belongs to the potassium channel family. Calcium-activated (TC 1.A.1.3) subfamily. KCa1.1/KCNMA1 sub-subfamily. In terms of assembly, homotetramer; which constitutes the calcium-activated potassium channel. Post-translationally, phosphorylated. In terms of processing, palmitoylated.

It is found in the cell membrane. It carries out the reaction K(+)(in) = K(+)(out). Its function is as follows. Potassium channel activated by both membrane depolarization or increase in cytosolic Ca(2+) that mediates export of K(+). It is also activated by the concentration of cytosolic Mg(2+). Its activation dampens the excitatory events that elevate the cytosolic Ca(2+) concentration and/or depolarize the cell membrane. It therefore contributes to repolarization of the membrane potential. Involved in determining peripheral auditory sensitivity. The polypeptide is Calcium-activated potassium channel subunit alpha-1a (Danio rerio (Zebrafish)).